Here is a 350-residue protein sequence, read N- to C-terminus: Glycerol-1-phosphate dehydrogenase [NAD(P)+] (350 aa).

Residues 94-98 and 116-119 each bind NAD(+); these read GKPID and TVAS. A substrate-binding site is contributed by aspartate 121. Serine 125 lines the NAD(+) pocket. Position 168 (aspartate 168) interacts with substrate. Residues aspartate 168 and histidine 248 each contribute to the Zn(2+) site. Substrate is bound at residue histidine 252. Histidine 264 serves as a coordination point for Zn(2+).

Belongs to the glycerol-1-phosphate dehydrogenase family. Requires Zn(2+) as cofactor.

Its subcellular location is the cytoplasm. It catalyses the reaction sn-glycerol 1-phosphate + NAD(+) = dihydroxyacetone phosphate + NADH + H(+). The catalysed reaction is sn-glycerol 1-phosphate + NADP(+) = dihydroxyacetone phosphate + NADPH + H(+). Its pathway is membrane lipid metabolism; glycerophospholipid metabolism. Functionally, catalyzes the NAD(P)H-dependent reduction of dihydroxyacetonephosphate (DHAP or glycerone phosphate) to glycerol 1-phosphate (G1P). The G1P thus generated is used as the glycerophosphate backbone of phospholipids in the cellular membranes of Archaea. The sequence is that of Glycerol-1-phosphate dehydrogenase [NAD(P)+] from Halorubrum lacusprofundi (strain ATCC 49239 / DSM 5036 / JCM 8891 / ACAM 34).